Consider the following 193-residue polypeptide: Segregation and condensation protein B (193 aa).

It belongs to the ScpB family. Homodimer. Homodimerization may be required to stabilize the binding of ScpA to the Smc head domains. Component of a cohesin-like complex composed of ScpA, ScpB and the Smc homodimer, in which ScpA and ScpB bind to the head domain of Smc. The presence of the three proteins is required for the association of the complex with DNA.

It is found in the cytoplasm. Functionally, participates in chromosomal partition during cell division. May act via the formation of a condensin-like complex containing Smc and ScpA that pull DNA away from mid-cell into both cell halves. The sequence is that of Segregation and condensation protein B from Streptococcus thermophilus (strain CNRZ 1066).